We begin with the raw amino-acid sequence, 437 residues long: Epsilon-sarcoglycan (437 aa).

Residues Met-1–Phe-317 lie on the Extracellular side of the membrane. The N-linked (GlcNAc...) asparagine glycan is linked to Asn-200. Residues Leu-318–Ile-338 traverse the membrane as a helical segment. Residues Met-339 to Pro-437 are Cytoplasmic-facing.

This sequence belongs to the sarcoglycan alpha/epsilon family. In terms of processing, N-glycosylated. Ubiquitinated, leading to its degradation by the proteasome.

The protein localises to the cell membrane. Its subcellular location is the sarcolemma. The protein resides in the cytoplasm. It localises to the cytoskeleton. It is found in the cell projection. The protein localises to the dendrite. Its subcellular location is the golgi apparatus. Component of the sarcoglycan complex, a subcomplex of the dystrophin-glycoprotein complex which forms a link between the F-actin cytoskeleton and the extracellular matrix. This is Epsilon-sarcoglycan from Macaca fascicularis (Crab-eating macaque).